A 224-amino-acid chain; its full sequence is UPF0758 protein Mmwyl1_0624 (224 aa).

One can recognise an MPN domain in the interval 102–224; it reads VFASAEHVRT…PVSLAERGLV (123 aa). 3 residues coordinate Zn(2+): H173, H175, and D186. Residues 173–186 carry the JAMM motif motif; that stretch reads HNHPSGIAEPSQAD.

It belongs to the UPF0758 family.

This is UPF0758 protein Mmwyl1_0624 from Marinomonas sp. (strain MWYL1).